We begin with the raw amino-acid sequence, 95 residues long: Large ribosomal subunit protein bL25 (95 aa).

It belongs to the bacterial ribosomal protein bL25 family. As to quaternary structure, part of the 50S ribosomal subunit; part of the 5S rRNA/L5/L18/L25 subcomplex. Contacts the 5S rRNA. Binds to the 5S rRNA independently of L5 and L18.

Its function is as follows. This is one of the proteins that binds to the 5S RNA in the ribosome where it forms part of the central protuberance. This is Large ribosomal subunit protein bL25 from Shewanella halifaxensis (strain HAW-EB4).